Consider the following 150-residue polypeptide: U1 small nuclear ribonucleoprotein C (150 aa).

The Matrin-type zinc-finger motif lies at 4-36 (YYCDYCKSYLTHDTMSVRKSHLQGRNHIKFYCD). Residues 66–127 (SDAKKSNGSS…PPNLSGLPLP (62 aa)) are disordered. Positions 80–92 (DIDKKENSSDHNK) are enriched in basic and acidic residues. Over residues 103–112 (NDNDDDDDEM) the composition is skewed to acidic residues.

This sequence belongs to the U1 small nuclear ribonucleoprotein C family. As to quaternary structure, U1 snRNP is composed of the 7 core Sm proteins B/B', D1, D2, D3, E, F and G that assemble in a heptameric protein ring on the Sm site of the small nuclear RNA to form the core snRNP, and at least 3 U1 snRNP-specific proteins U1-70K, U1-A and U1-C. U1-C interacts with U1 snRNA and the 5' splice-site region of the pre-mRNA.

The protein localises to the nucleus. In terms of biological role, component of the spliceosomal U1 snRNP, which is essential for recognition of the pre-mRNA 5' splice-site and the subsequent assembly of the spliceosome. U1-C is directly involved in initial 5' splice-site recognition for both constitutive and regulated alternative splicing. The interaction with the 5' splice-site seems to precede base-pairing between the pre-mRNA and the U1 snRNA. Stimulates commitment or early (E) complex formation by stabilizing the base pairing of the 5' end of the U1 snRNA and the 5' splice-site region. The polypeptide is U1 small nuclear ribonucleoprotein C (Candida albicans (strain WO-1) (Yeast)).